The sequence spans 374 residues: Very late expression factor 1 (374 aa).

The region spanning 169-349 is the Tyr recombinase domain; it reads AIDTILNFID…NFDESSSDEE (181 aa). Active-site residues include Arg-210, Lys-239, Arg-303, and His-326. Residues 328–374 form a disordered region; the sequence is SPASTKPYLNKYNFDESSSDEESGGNNRDSSTGSSANSSSLYYQTGD. Tyr-335 (O-(3'-phospho-DNA)-tyrosine intermediate) is an active-site residue. Over residues 357-367 the composition is skewed to low complexity; sequence SSTGSSANSSS.

The protein belongs to the 'phage' integrase family.

Its function is as follows. Involved in very late gene activation. The chain is Very late expression factor 1 (VLF-1) from Orgyia pseudotsugata (Douglas-fir tussock moth).